Reading from the N-terminus, the 73-residue chain is Antimicrobial peptide TsAP-1 (73 aa).

The signal sequence occupies residues 1–22 (MQIKHLITLFFLVLIVADQCSA). Residue Lys39 is modified to Lysine amide. The propeptide occupies 45-73 (EISAQIEQYKDLQKREAELEELLDRLPMY).

As to expression, expressed by the venom gland.

The protein localises to the secreted. In terms of biological role, has a low antimicrobial activity against S.aureus, E.coli, and C.albicans (MICs 120-160 uM). Has a low hemolytic activity (4% at 160 uM). Also inhibits the growth of two cancer cell lines on a total of five (the squamous carcinoma cell line H157 (IC(50)=55.9 uM) and the lung adenocarcinoma cell line H838 (IC(50)=52.5 uM)). This chain is Antimicrobial peptide TsAP-1, found in Tityus serrulatus (Brazilian scorpion).